Consider the following 531-residue polypeptide: UPF0159 protein CPn_0746/CP_1126/CPj0746/CpB0774 (531 aa).

2 consecutive ThyX domains span residues 38–274 and 309–511; these read KGAL…AEPH and PSVQ…FKFV.

This sequence belongs to the UPF0159 family.

This chain is UPF0159 protein CPn_0746/CP_1126/CPj0746/CpB0774, found in Chlamydia pneumoniae (Chlamydophila pneumoniae).